A 605-amino-acid polypeptide reads, in one-letter code: Tungsten-containing aldehyde ferredoxin oxidoreductase (605 aa).

Arginine 76, asparagine 93, glycine 95, arginine 182, alanine 183, glycine 185, and arginine 186 together coordinate tungstopterin. Cysteine 288, cysteine 291, and cysteine 295 together coordinate [4Fe-4S] cluster. Tungstopterin is bound by residues aspartate 338, leucine 342, aspartate 343, arginine 444, lysine 450, aspartate 489, and leucine 493. Residue cysteine 494 coordinates [4Fe-4S] cluster. Position 495 (leucine 495) interacts with tungstopterin.

The protein belongs to the AOR/FOR family. In terms of assembly, monomer. Homodimer. The cofactor is [4Fe-4S] cluster. Tungstopterin is required as a cofactor.

It catalyses the reaction an aldehyde + 2 oxidized [2Fe-2S]-[ferredoxin] + H2O = a carboxylate + 2 reduced [2Fe-2S]-[ferredoxin] + 3 H(+). Inhibited by arsenite, iodoacetate and cyanide. In terms of biological role, aldehyde ferredoxin oxidoreductase with a broad substrate specificity. Catalyzes the oxidation of a range of aliphatic aldehydes to their corresponding carboxylic acids. In vitro can use crotonaldehyde, acetaldehyde, formaldehyde, butyraldehyde or glyceraldehyde as substrate, using methyl viologen or ferredoxin, but not NAD(P), as the electron acceptor. Does not oxidize glucose or glyceraldehyde 3-phosphate. May be involved in a pyroglycolytic pathway. This chain is Tungsten-containing aldehyde ferredoxin oxidoreductase, found in Pyrococcus furiosus (strain ATCC 43587 / DSM 3638 / JCM 8422 / Vc1).